Reading from the N-terminus, the 1567-residue chain is Myosin-2A (1567 aa).

In terms of domain architecture, Myosin N-terminal SH3-like spans 4 to 57; sequence EVGTRCWYPSKEQGWIGAEVTKNDLKDGTYFMELTLEDNEVVNVETKDLTNEKD. The region spanning 70–786 is the Myosin motor domain; it reads ESTEDLTTLS…MLAYFEKLRS (717 aa). 164-171 is an ATP binding site; sequence GESGAGKT. An actin-binding region spans residues 446–526; that stretch reads FIGVLDIYGF…LGILSLLDEE (81 aa). Positions 619-640 are disordered; sequence EEAKKNAASQDQKQLKKPTPIR. IQ domains are found at residues 789–818, 812–836, 837–859, 860–884, 885–907, and 908–937; these read MNSA…SLSL, MKAS…EYEL, EQHA…YISG, VISS…QSKY, ESNA…AYES, and KRRD…DAKS. Residues 947-1091 adopt a coiled-coil conformation; it reads KLENKVIQLT…LAHLQTSIAL (145 aa). The non alpha-helical, tail domain stretch occupies residues 1092 to 1567; sequence GTVTTNTNIV…VAQQVTVPDA (476 aa). In terms of domain architecture, Dilute spans 1230 to 1505; it reads AQVLTTIQKV…LKYVADIVKK (276 aa).

The protein belongs to the TRAFAC class myosin-kinesin ATPase superfamily. Myosin family. In terms of assembly, homodimer. Interacts with calmodulin (CMD1) and the myosin light chain MLC1 through its IQ repeats.

Functionally, myosin heavy chain that is required for the cell cycle-regulated transport of various organelles and proteins for their segregation. Functions by binding with its tail domain to receptor proteins on organelles and exerting force with its N-terminal motor domain against actin filaments, thereby transporting its cargo along polarized actin cables. The protein is Myosin-2A (MYO2A) of Naumovozyma castellii (Yeast).